A 301-amino-acid polypeptide reads, in one-letter code: Probable alpha-L-glutamate ligase (301 aa).

Residues 104–287 enclose the ATP-grasp domain; sequence TQLLARKGIG…IAGTIYAFLE (184 aa). Residues Lys-141, 178 to 179, Asp-187, and 211 to 213 contribute to the ATP site; these read EY and RSN. Residues Asp-248, Glu-260, and Asn-262 each coordinate Mg(2+). The Mn(2+) site is built by Asp-248, Glu-260, and Asn-262.

The protein belongs to the RimK family. It depends on Mg(2+) as a cofactor. Mn(2+) serves as cofactor.

The polypeptide is Probable alpha-L-glutamate ligase (Alkalilimnicola ehrlichii (strain ATCC BAA-1101 / DSM 17681 / MLHE-1)).